Here is a 424-residue protein sequence, read N- to C-terminus: D-inositol 3-phosphate glycosyltransferase (424 aa).

Position 21 (His21) interacts with 1D-myo-inositol 3-phosphate. UDP-N-acetyl-alpha-D-glucosamine-binding positions include 27-28 and Gly35; that span reads QP. Residues 32–37, Lys90, Tyr123, Thr147, and Arg167 each bind 1D-myo-inositol 3-phosphate; that span reads DAGGMN. UDP-N-acetyl-alpha-D-glucosamine-binding residues include Arg241, Lys246, and Gln299. Positions 308, 309, and 311 each coordinate Mg(2+). Positions 321 and 329 each coordinate UDP-N-acetyl-alpha-D-glucosamine. Residue Thr335 participates in Mg(2+) binding.

It belongs to the glycosyltransferase group 1 family. MshA subfamily. As to quaternary structure, homodimer.

The catalysed reaction is 1D-myo-inositol 3-phosphate + UDP-N-acetyl-alpha-D-glucosamine = 1D-myo-inositol 2-acetamido-2-deoxy-alpha-D-glucopyranoside 3-phosphate + UDP + H(+). Functionally, catalyzes the transfer of a N-acetyl-glucosamine moiety to 1D-myo-inositol 3-phosphate to produce 1D-myo-inositol 2-acetamido-2-deoxy-glucopyranoside 3-phosphate in the mycothiol biosynthesis pathway. This Mycobacterium avium (strain 104) protein is D-inositol 3-phosphate glycosyltransferase.